We begin with the raw amino-acid sequence, 198 residues long: Protein C4 (198 aa).

A disordered region spans residues 1–36; it reads MFNPRHPGGEFFGRKHHRRHAPDGRSSSSSSSSSEC.

The protein is Protein C4 (C4) of Giardia intestinalis (Giardia lamblia).